Here is an 89-residue protein sequence, read N- to C-terminus: Neuropeptide F (89 aa).

A signal peptide spans 1–29 (MASGTFTQRLLVALMIFALIADLSTLVAA). Phenylalanine 61 is modified (phenylalanine amide). The propeptide occupies 65 to 89 (GGYLNPAIFGQDEQEVDWQDSTFSR).

It belongs to the NPY family.

The protein localises to the secreted. An integral part of the sensory system that mediates food signaling, providing the neural basis for the regulation of food response; coordinates larval foraging and social behavior changes during development. May have a hormonal role in females. This Anopheles gambiae (African malaria mosquito) protein is Neuropeptide F.